We begin with the raw amino-acid sequence, 800 residues long: MTSRLDHTIVIPSSPEQNWARSVSPCTPTRLFGLPPMSISPPSLPSPSRLFEEIGLGQQKNPPSPKSPFSSAAGKTATSKAITENPSRNESSSKRGRPGSSEAKTAGSRKNSKSQETRNKILTGRVAKPTTVSKAKATAASKSKDTSVVKAKAGTKKSKPASQNKKDKLAEEAEAEAKEVADAEGLNLEEALKRRSDWTPPKALSLVSIDEDTPSQGSGTKLSFGDVLRDYHYNRENSSCEPAQPSKEGNPTKRRRLELVEFEVLQERKPIQQKQIKDAVKTRKTKSKPKKQLNTITARVTARYEQIGELEDLFVYNEESSCETSECLKKPTKPKKETAGKQKEPEYIILSPDAATKSLNDQNFLFGTCSQLERDDSPTFFEETQTAIQLSECLTFKKTASTITTASSAMSIATRFTGKKSHWSEAARDFNGAVVQPEIIDMTDSPTVSVALSRLSEVKHDAPKMASLVSSQSVSATNSLVPKDVVTASKPAADVQLASSGPEPNKTELAAGPFRKTASRLPEMPNFNGYTDSELKNQVLSYGFSLRAVRGRKKMIELLDKCWQSKHGNTATAAIVETSSSAAINETVSVSAARHSDTQVSDKLPTRKKKTTPSRLEPKTTSRAGKKKVSEKPLAGKADKPVEKAASPIPASTYNMVDEIEDSEEEIIPSPTRIQIQRQSSSRQTTPAISCLPLGTKSKRSLKSTKSSTYDEATLLELQSSITKAIHLQTRPRRSLGGSSYSPQLTWHEKILLYEPIILEDFAAWLNTEGFALACEDREVGVALVRTWCESRGICCTFRP.

Positions 16–27 (EQNWARSVSPCT) are enriched in polar residues. Disordered stretches follow at residues 16–186 (EQNW…AEGL), 235–255 (RENSSCEPAQPSKEGNPTKRR), and 590–654 (VSAA…ASTY). 2 stretches are compositionally biased toward low complexity: residues 67-81 (SPFSSAAGKTATSKA) and 126-141 (VAKPTTVSKAKATAAS). Residues 164–181 (NKKDKLAEEAEAEAKEVA) are compositionally biased toward basic and acidic residues.

This sequence belongs to the SLX4 family. As to quaternary structure, forms a heterodimer with slx1. Phosphorylated in response to DNA damage.

It is found in the nucleus. Its function is as follows. Regulatory subunit of the slx1-slx4 structure-specific endonuclease that resolves DNA secondary structures generated during DNA repair and recombination. Has endonuclease activity towards branched DNA substrates, introducing single-strand cuts in duplex DNA close to junctions with ss-DNA. This Talaromyces stipitatus (strain ATCC 10500 / CBS 375.48 / QM 6759 / NRRL 1006) (Penicillium stipitatum) protein is Structure-specific endonuclease subunit slx4 (slx4).